We begin with the raw amino-acid sequence, 374 residues long: Queuine tRNA-ribosyltransferase (374 aa).

The active-site Proton acceptor is the aspartate 91. Residues 91–95 (DSGGY), aspartate 145, glutamine 189, and glycine 216 contribute to the substrate site. Positions 247-253 (GVGTVPD) are RNA binding. Aspartate 266 serves as the catalytic Nucleophile. Residues 271 to 275 (TRNAR) form an RNA binding; important for wobble base 34 recognition region. Zn(2+) is bound by residues cysteine 304, cysteine 306, cysteine 309, and histidine 335.

This sequence belongs to the queuine tRNA-ribosyltransferase family. Homodimer. Within each dimer, one monomer is responsible for RNA recognition and catalysis, while the other monomer binds to the replacement base PreQ1. Zn(2+) serves as cofactor.

It catalyses the reaction 7-aminomethyl-7-carbaguanine + guanosine(34) in tRNA = 7-aminomethyl-7-carbaguanosine(34) in tRNA + guanine. It functions in the pathway tRNA modification; tRNA-queuosine biosynthesis. Catalyzes the base-exchange of a guanine (G) residue with the queuine precursor 7-aminomethyl-7-deazaguanine (PreQ1) at position 34 (anticodon wobble position) in tRNAs with GU(N) anticodons (tRNA-Asp, -Asn, -His and -Tyr). Catalysis occurs through a double-displacement mechanism. The nucleophile active site attacks the C1' of nucleotide 34 to detach the guanine base from the RNA, forming a covalent enzyme-RNA intermediate. The proton acceptor active site deprotonates the incoming PreQ1, allowing a nucleophilic attack on the C1' of the ribose to form the product. After dissociation, two additional enzymatic reactions on the tRNA convert PreQ1 to queuine (Q), resulting in the hypermodified nucleoside queuosine (7-(((4,5-cis-dihydroxy-2-cyclopenten-1-yl)amino)methyl)-7-deazaguanosine). This is Queuine tRNA-ribosyltransferase from Leptospira interrogans serogroup Icterohaemorrhagiae serovar Lai (strain 56601).